Consider the following 445-residue polypeptide: Chromosome partition protein MukF (445 aa).

A leucine-zipper region spans residues 213–241 (LSETSATLKELQDTLQAAGDELQTQILDI).

The protein belongs to the MukF family. In terms of assembly, interacts, and probably forms a ternary complex, with MukE and MukB via its C-terminal region. The complex formation is stimulated by calcium or magnesium. It is required for an interaction between MukE and MukB.

It is found in the cytoplasm. It localises to the nucleoid. Involved in chromosome condensation, segregation and cell cycle progression. May participate in facilitating chromosome segregation by condensation DNA from both sides of a centrally located replisome during cell division. Not required for mini-F plasmid partitioning. Probably acts via its interaction with MukB and MukE. Overexpression results in anucleate cells. It has a calcium binding activity. In Vibrio atlanticus (strain LGP32) (Vibrio splendidus (strain Mel32)), this protein is Chromosome partition protein MukF.